The sequence spans 420 residues: MDRFHIQGPTTLKGEVVISGAKNSALPILFATLLTSEPVEIYNVPKLKDIDTAIKLLNQLGAQVEHQNIIVFSDTSKVHACCAPYDLVKSIRASIWILGPLVARFGYGKVWFPGGCSIGKRLVDLHIKGLKKLGAKIILGEEYVIASVNGRLQGAHIVMDKISVGATVTIMSAATLARGITIIDNAAREPEVIDTANFLIMLGTNIIGAGSNRIIIEGTQKLKGGRYCIIPDRIETGTFLVAAAISRSHVICLRSNPNILKCVLRKLRESGADINTGKDWISLNMHGRRPKAIKICTKPYPGFPTDMQAQFTLLNVVAIGVGKVIETIFENRFMHVPELIRMGARVQILNNTIICHGVDTLIGTRVVSTDLRASVSLVLAGCIAEGLTIIDQVNHVDRGYDNIERKLQNMGAHIQRITDK.

Residue 22-23 (KN) coordinates phosphoenolpyruvate. Residue R92 participates in UDP-N-acetyl-alpha-D-glucosamine binding. The active-site Proton donor is C116. A 2-(S-cysteinyl)pyruvic acid O-phosphothioketal modification is found at C116. UDP-N-acetyl-alpha-D-glucosamine contacts are provided by D306 and I328.

This sequence belongs to the EPSP synthase family. MurA subfamily.

It localises to the cytoplasm. It catalyses the reaction phosphoenolpyruvate + UDP-N-acetyl-alpha-D-glucosamine = UDP-N-acetyl-3-O-(1-carboxyvinyl)-alpha-D-glucosamine + phosphate. Its pathway is cell wall biogenesis; peptidoglycan biosynthesis. Cell wall formation. Adds enolpyruvyl to UDP-N-acetylglucosamine. This chain is UDP-N-acetylglucosamine 1-carboxyvinyltransferase, found in Blochmanniella floridana.